Consider the following 207-residue polypeptide: N-(5'-phosphoribosyl)anthranilate isomerase (207 aa).

This sequence belongs to the TrpF family.

It carries out the reaction N-(5-phospho-beta-D-ribosyl)anthranilate = 1-(2-carboxyphenylamino)-1-deoxy-D-ribulose 5-phosphate. It functions in the pathway amino-acid biosynthesis; L-tryptophan biosynthesis; L-tryptophan from chorismate: step 3/5. The sequence is that of N-(5'-phosphoribosyl)anthranilate isomerase from Legionella pneumophila subsp. pneumophila (strain Philadelphia 1 / ATCC 33152 / DSM 7513).